The sequence spans 876 residues: DNA polymerase I (876 aa).

One can recognise a 5'-3' exonuclease domain in the interval 1 to 310 (MKNKLVLIDG…FAIADSVTDE (310 aa)). The subtilisin large fragment stretch occupies residues 289–876 (TDEGEKPLAG…HYGPTWYDAK (588 aa)). The polymerase stretch occupies residues 469–876 (EQDRLLTELE…HYGPTWYDAK (408 aa)).

Belongs to the DNA polymerase type-A family. Single-chain monomer with multiple functions.

The enzyme catalyses DNA(n) + a 2'-deoxyribonucleoside 5'-triphosphate = DNA(n+1) + diphosphate. In addition to polymerase activity, the recombinant enzyme has strand displacement and 5'-3' exonuclease activity, but lacks proofreading 3'-5' exonuclease activity. This chain is DNA polymerase I (polA), found in Geobacillus stearothermophilus (Bacillus stearothermophilus).